The sequence spans 919 residues: MFS-type transporter clz9 (919 aa).

Positions 1 to 11 (MAASTKPTTKL) are enriched in polar residues. The segment at 1-33 (MAASTKPTTKLSTEEDDVSRRDSESSADFMKSN) is disordered. A helical membrane pass occupies residues 69–89 (VVASFAAAISPFSTSTYYPVV). Residue Asn104 is glycosylated (N-linked (GlcNAc...) asparagine). The next 3 helical transmembrane spans lie at 132-152 (PMFL…ALQN), 192-212 (LIYA…IGGL), and 222-242 (VFWF…IFFG). N-linked (GlcNAc...) asparagine glycosylation is present at Asn260. Helical transmembrane passes span 303 to 323 (FILS…TSVL), 333 to 353 (YDAV…LLAY), 393 to 413 (LGFV…YGWQ), and 418 to 438 (APLA…TGVM). The N-linked (GlcNAc...) asparagine glycan is linked to Asn461. Residues 465-485 (LLLGAGAVAVVGPLNKSAGIG) form a helical membrane-spanning segment. Residues 641-809 (REWVTLIQGI…FTSANICSSF (169 aa)) enclose the DDE-1 domain. A disordered region spans residues 840 to 897 (EAPWEAKTPSNRKKKQIQKRGTLTKGEGEDTLAQKEADQQIEREQRQGGEQSGRSRQA). The span at 865–886 (GEGEDTLAQKEADQQIEREQRQ) shows a compositional bias: basic and acidic residues. The segment covering 887 to 896 (GGEQSGRSRQ) has biased composition (low complexity). An N-linked (GlcNAc...) asparagine glycan is attached at Asn915.

The protein belongs to the major facilitator superfamily. CAR1 family.

It is found in the membrane. MFS-type transporter; part of the gene cluster that mediates the biosynthesis of squalestatin S1 (SQS1, also known as zaragozic acid A), a heavily oxidized fungal polyketide that offers potent cholesterol lowering activity by targeting squalene synthase (SS). This is MFS-type transporter clz9 from Cochliobolus lunatus (Filamentous fungus).